The sequence spans 253 residues: Large ribosomal subunit protein bL28m (253 aa).

Residues 1–55 (MPLHKYPPALWDVLKLKDGIYARLPEHYRRSLLEKHKPYPVHWKPHGLKYRLNPK) constitute a mitochondrion transit peptide.

The protein belongs to the bacterial ribosomal protein bL28 family. Component of the mitochondrial ribosome large subunit (39S) which comprises a 16S rRNA and about 50 distinct proteins.

It is found in the mitochondrion. The protein is Large ribosomal subunit protein bL28m (mrpl28) of Xenopus laevis (African clawed frog).